A 220-amino-acid chain; its full sequence is CDP-diacylglycerol--inositol 3-phosphatidyltransferase (220 aa).

Over 1–20 (MSSNSTPEKVTAEHVLWYIP) the chain is Cytoplasmic. The chain crosses the membrane as a helical span at residues 21–41 (NKIGYVRVITAALSFFVMKNH). The Lumenal segment spans residues 42 to 45 (PTAF). The chain crosses the membrane as a helical span at residues 46–66 (TWLYSTSCLLDALDGTMARKY). D56 and D59 together coordinate Mg(2+). 3 residues coordinate a CDP-1,2-diacyl-sn-glycerol: G60, R64, and S70. Residues 67-75 (NQVSSLGAV) lie on the Cytoplasmic side of the membrane. A helical transmembrane segment spans residues 76–96 (LDMVTDRSSTAGLMCFLCVQY). Residues D77 and D81 each coordinate Mg(2+). The Proton acceptor role is filled by D81. Residues 97 to 98 (PQ) are Lumenal-facing. Residues 99–119 (WCVFFQLMLGLDITSHYMHMY) form a helical membrane-spanning segment. Residues 120–145 (ASLSAGKTSHKSVGEGESRLLHLYYT) are Cytoplasmic-facing. Residues 146–166 (RRDVLFTICAFNELFYAGLYL) form a helical membrane-spanning segment. Residues 167-170 (QLFS) lie on the Lumenal side of the membrane. Residues 171-191 (NSATFGKWTTIISFPGYVFKQ) traverse the membrane as a helical segment. The Cytoplasmic segment spans residues 192–220 (TANVVQLKRAALILADNDAKNANEKNKTY).

Belongs to the CDP-alcohol phosphatidyltransferase class-I family. It depends on Mn(2+) as a cofactor. Requires Mg(2+) as cofactor.

The protein resides in the microsome membrane. Its subcellular location is the endoplasmic reticulum membrane. The protein localises to the golgi apparatus membrane. It localises to the mitochondrion outer membrane. The catalysed reaction is a CDP-1,2-diacyl-sn-glycerol + myo-inositol = a 1,2-diacyl-sn-glycero-3-phospho-(1D-myo-inositol) + CMP + H(+). Functionally, catalyzes the synthesis of phosphatidylinositol (PtdIns). This chain is CDP-diacylglycerol--inositol 3-phosphatidyltransferase, found in Saccharomyces cerevisiae (strain ATCC 204508 / S288c) (Baker's yeast).